A 135-amino-acid polypeptide reads, in one-letter code: Holo-[acyl-carrier-protein] synthase (135 aa).

The Mg(2+) site is built by D8 and E58.

It belongs to the P-Pant transferase superfamily. AcpS family. Mg(2+) is required as a cofactor.

It localises to the cytoplasm. The enzyme catalyses apo-[ACP] + CoA = holo-[ACP] + adenosine 3',5'-bisphosphate + H(+). Transfers the 4'-phosphopantetheine moiety from coenzyme A to a Ser of acyl-carrier-protein. The protein is Holo-[acyl-carrier-protein] synthase of Ligilactobacillus salivarius (strain UCC118) (Lactobacillus salivarius).